We begin with the raw amino-acid sequence, 1441 residues long: Envelopment polyprotein (1441 aa).

A signal peptide spans 1-13 (MICILVLITVAAA). Topologically, residues 14–200 (SPVYQRCFQD…GSIANSICQN (187 aa)) are lumenal. An N-linked (GlcNAc...) asparagine; by host glycan is attached at Asn57. Residues 201–221 (IEIIILVTLTLLIFILLSILS) are membrane-embedded. Residues 222 to 305 (KTYICYLLMP…RAARVMCKSK (84 aa)) are Cytoplasmic-facing. Positions 306–326 (GPASILSIITAVLVLTFVTPI) form a transmembrane segment. Topologically, residues 327 to 361 (NSMVLGESKETFELEDLPDDMLEMASRINSYYLTC) are lumenal. Over 362 to 382 (ILNYAVSWGLVIIGLLIGLLF) the chain traverses the membrane. Topologically, residues 383 to 450 (KKYQHRFLNV…NCLVQYKAKW (68 aa)) are cytoplasmic. Residues 451–471 (MMNFLIIYIFLILIKDSAIVV) are membrane-embedded. Topologically, residues 472 to 1395 (QAAGTDFTTC…EPFKNLFGSY (924 aa)) are lumenal. N-linked (GlcNAc...) asparagine; by host glycosylation is present at Asn490. Residues 1066 to 1087 (WGCEEFGCLAVSDGCVFGSCQD) are fusion peptide. N-linked (GlcNAc...) asparagine; by host glycosylation occurs at Asn1177. A transmembrane span lies at residues 1396–1416 (IGIFYTFIISIVVLLVIIYVL). Residues 1417-1433 (LPICFKLRDTLRKHEDA) lie on the Cytoplasmic side of the membrane.

It belongs to the orthobunyaviruses M polyprotein family. As to quaternary structure, glycoprotein C and Glycoprotein N interact with each other.

Its subcellular location is the virion membrane. The protein localises to the host Golgi apparatus membrane. The protein resides in the host endoplasmic reticulum membrane. In terms of biological role, glycoprotein C and glycoprotein N interact with each other and are present at the surface of the virion. They are able to attach the virion to a cell receptor and to promote fusion of membranes after endocytosis of the virion. In Bunyavirus La Crosse (isolate Human/United States/L78/1978), this protein is Envelopment polyprotein (GP).